A 336-amino-acid polypeptide reads, in one-letter code: Ketoreductase adrE (336 aa).

Tyrosine 171 serves as a coordination point for NADP(+).

This sequence belongs to the NAD(P)-dependent epimerase/dehydratase family. Dihydroflavonol-4-reductase subfamily.

Its pathway is secondary metabolite biosynthesis; terpenoid biosynthesis. Ketoreductase; part of the gene cluster that mediates the biosynthesis of andrastins, meroterpenoid compounds that exhibit inhibitory activity against ras farnesyltransferase, suggesting that they could be promising leads for antitumor agents. The first step of the pathway is the synthesis of 3,5-dimethylorsellinic acid (DMOA) by the polyketide synthase adrD via condensation of one acetyl-CoA starter unit with 3 malonyl-CoA units and 2 methylations. DMAO is then converted to farnesyl-DMAO by the prenyltransferase adrG. The methyltransferase adrK catalyzes the methylation of the carboxyl group of farnesyl-DMAO to farnesyl-DMAO methyl ester which is further converted to epoxyfarnesyl-DMAO methyl ester by the FAD-dependent monooxygenase adrH. The terpene cyclase adrI then catalyzes the carbon skeletal rearrangement to generate the andrastin E, the first compound in the pathway having the andrastin scaffold, with the tetracyclic ring system. The post-cyclization tailoring enzymes adrF, adrE, adrJ, and adrA, are involved in the conversion of andrastin E into andrastin A. The short chain dehydrogenase adrF is responsible for the oxidation of the C-3 a hydroxyl group of andrastin E to yield the corresponding ketone, andrastin D. The ketoreductase adrE stereoselectively reduces the carbonyl moiety to reverse the stereochemistry of the C-3 position to yield andrastin F. The acetyltransferase adrJ is the acetyltransferase that attaches the acetyl group to the C-3 hydroxyl group of andrastin F to yield andrastin C. Finally, the cytochrome P450 monooxygenase adrA catalyzes two sequential oxidation reactions of the C-23 methyl group, to generate the corresponding alcohol andrastin B, and aldehyde andrastin A. The polypeptide is Ketoreductase adrE (Penicillium rubens (strain ATCC 28089 / DSM 1075 / NRRL 1951 / Wisconsin 54-1255) (Penicillium chrysogenum)).